A 211-amino-acid chain; its full sequence is Proline-rich 33 kDa extensin-related protein (211 aa).

Positions 1–14 (AILGVAIFAAPSLA) are cleaved as a signal peptide. Pro residues-rich tracts occupy residues 25–59 (PPVY…PVHK) and 82–93 (HKPPVYKPPVQK). A disordered region spans residues 25 to 211 (PPVYTPPVHK…RHPPVENTGN (187 aa)). 2 stretches are compositionally biased toward basic residues: residues 101-111 (PVHKPPIHKPP) and 127-139 (PIHK…RPPV). Basic and acidic residues-rich tracts occupy residues 142-159 (PPTE…EHKP) and 167-177 (KTEKPVPEHKP). Over residues 179–198 (HLPPIVVRPPPTHKPNPPYG) the composition is skewed to pro residues.

The protein belongs to the plant proline-rich protein superfamily. ENOD12 family.

The protein resides in the secreted. Its subcellular location is the cell wall. The polypeptide is Proline-rich 33 kDa extensin-related protein (Daucus carota (Wild carrot)).